Consider the following 355-residue polypeptide: DnaJ homolog dnj-20 (355 aa).

An N-terminal signal peptide occupies residues 1–21 (MRILNVSLLVLASSLVAFVEC). Residues 24–89 (DFYKILGVAK…EKRAMYDRHG (66 aa)) form the J domain.

The sequence is that of DnaJ homolog dnj-20 from Caenorhabditis elegans.